A 204-amino-acid polypeptide reads, in one-letter code: Vacuolar protein-sorting-associated protein 46 (204 aa).

Positions 1 to 103 (MSRNSAAGLE…ASMGQVCKGM (103 aa)) are interaction with VSP24. At serine 5 the chain carries Phosphoserine. 2 coiled-coil regions span residues 9–56 (LENT…RIYA) and 109–129 (NMNL…FEDL). The tract at residues 104 to 204 (DKALQNMNLQ…LAQRLRALRG (101 aa)) is interaction with VSP4. The interval 176 to 204 (NVPEIKAKEVNVDDEKEDKLAQRLRALRG) is interaction with VTA1. Residues 185-196 (VNVDDEKEDKLA) are compositionally biased toward basic and acidic residues. The segment at 185–204 (VNVDDEKEDKLAQRLRALRG) is disordered.

Belongs to the SNF7 family. As to quaternary structure, self-associates. Interacts with VPS4 and VTA1. Interacts with IST1.

Its subcellular location is the endosome membrane. It is found in the endomembrane system. Class E VPS protein implicated in concentration and sorting of cargo proteins of the multivesicular body (MVB) for incorporation into intralumenal vesicles. The lumenal sequestrated membrane proteins will be targeted into the vacuole after fusion of the endosome with the vacuole. Probably acts as a peripherally associated component of the ESCRT-III complex, which appears to be critical for late steps in MVB sorting, such as membrane invagination and final cargo sorting and recruits late-acting components of the sorting machinery. The MVB pathway requires the sequential function of ESCRT-O, -I,-II and -III complex assemblies. Regulates the membrane association of VPS4. Can stimulate VPS4 ATPase activity directly or via VTA1. This Saccharomyces cerevisiae (strain ATCC 204508 / S288c) (Baker's yeast) protein is Vacuolar protein-sorting-associated protein 46 (DID2).